A 268-amino-acid chain; its full sequence is Type III pantothenate kinase (268 aa).

ATP is bound at residue 18–25 (DIGNTTTT). Residues Tyr-108 and 115 to 118 (GADR) each bind substrate. Asp-117 acts as the Proton acceptor in catalysis. Asp-138 contacts K(+). Thr-141 contacts ATP. Thr-193 contacts substrate.

Belongs to the type III pantothenate kinase family. Homodimer. Requires NH4(+) as cofactor. It depends on K(+) as a cofactor.

Its subcellular location is the cytoplasm. It carries out the reaction (R)-pantothenate + ATP = (R)-4'-phosphopantothenate + ADP + H(+). It participates in cofactor biosynthesis; coenzyme A biosynthesis; CoA from (R)-pantothenate: step 1/5. In terms of biological role, catalyzes the phosphorylation of pantothenate (Pan), the first step in CoA biosynthesis. This is Type III pantothenate kinase from Chlorobaculum parvum (strain DSM 263 / NCIMB 8327) (Chlorobium vibrioforme subsp. thiosulfatophilum).